A 1337-amino-acid chain; its full sequence is GTPase activating protein homolog 3 (1337 aa).

The 251-residue stretch at 14 to 264 (PESFADLWDG…LINSINNEDE (251 aa)) folds into the F-BAR domain. 2 disordered regions span residues 279 to 328 (PKPF…LPIF) and 345 to 392 (ITNS…RFST). The segment covering 293-302 (TPPPPPPPQI) has biased composition (pro residues). Residues 345–358 (ITNSLSLSSDSLQT) are compositionally biased toward polar residues. The Rho-GAP domain maps to 422 to 611 (CKIEDIMVAQ…NIIEHFKPLQ (190 aa)). 3 disordered regions span residues 612–689 (VNDS…TTNT), 733–781 (VNNN…HTVA), and 794–821 (ITTP…SPSE). Low complexity-rich tracts occupy residues 621–637 (SSSS…SIES), 645–687 (SSTN…SSTT), and 734–772 (NNNN…QQVS). A coiled-coil region spans residues 830–859 (YLEDQERCKQRIDELHTQVNELYSDITTIE). Disordered regions lie at residues 1041–1102 (SDPD…INNS) and 1114–1166 (KSAL…AHAI). Polar residues predominate over residues 1047–1063 (SPPTISNTTNRLLNTSG). 2 stretches are compositionally biased toward low complexity: residues 1064-1102 (STDF…INNS) and 1114-1159 (KSAL…TTTN). A coiled-coil region spans residues 1189–1219 (LEINNKLHSQLTEELKKKQQQYKQLIFDIID).

Its subcellular location is the cytoplasm. It localises to the contractile vacuole. Its function is as follows. Rho GTPase-activating protein involved in the signal transduction pathway. This chain is GTPase activating protein homolog 3 (mgp3), found in Dictyostelium discoideum (Social amoeba).